The following is a 327-amino-acid chain: Flap endonuclease 1 (327 aa).

Positions methionine 1–arginine 98 are N-domain. Positions 27, 80, 152, 154, 173, 175, and 226 each coordinate Mg(2+). The segment at glutamate 116–glycine 246 is I-domain. The interaction with PCNA stretch occupies residues serine 319 to phenylalanine 327.

It belongs to the XPG/RAD2 endonuclease family. FEN1 subfamily. In terms of assembly, interacts with PCNA. PCNA stimulates the nuclease activity without altering cleavage specificity. The cofactor is Mg(2+).

Functionally, structure-specific nuclease with 5'-flap endonuclease and 5'-3' exonuclease activities involved in DNA replication and repair. During DNA replication, cleaves the 5'-overhanging flap structure that is generated by displacement synthesis when DNA polymerase encounters the 5'-end of a downstream Okazaki fragment. Binds the unpaired 3'-DNA end and kinks the DNA to facilitate 5' cleavage specificity. Cleaves one nucleotide into the double-stranded DNA from the junction in flap DNA, leaving a nick for ligation. Also involved in the base excision repair (BER) pathway. Acts as a genome stabilization factor that prevents flaps from equilibrating into structures that lead to duplications and deletions. Also possesses 5'-3' exonuclease activity on nicked or gapped double-stranded DNA. This is Flap endonuclease 1 from Methanobrevibacter smithii (strain ATCC 35061 / DSM 861 / OCM 144 / PS).